The primary structure comprises 476 residues: Eukaryotic translation initiation factor 3 subunit L (476 aa).

The PCI domain occupies 257–452; it reads DAIRMFSHIL…DLDYALENDL (196 aa).

The protein belongs to the eIF-3 subunit L family. Component of the eukaryotic translation initiation factor 3 (eIF-3) complex.

It is found in the cytoplasm. Its function is as follows. Component of the eukaryotic translation initiation factor 3 (eIF-3) complex, which is involved in protein synthesis of a specialized repertoire of mRNAs and, together with other initiation factors, stimulates binding of mRNA and methionyl-tRNAi to the 40S ribosome. The eIF-3 complex specifically targets and initiates translation of a subset of mRNAs involved in cell proliferation. The polypeptide is Eukaryotic translation initiation factor 3 subunit L (Aspergillus clavatus (strain ATCC 1007 / CBS 513.65 / DSM 816 / NCTC 3887 / NRRL 1 / QM 1276 / 107)).